Consider the following 380-residue polypeptide: Cytochrome b (380 aa).

A run of 4 helical transmembrane segments spans residues 33-53, 77-98, 113-133, and 178-198; these read FGSL…FLAM, WLLR…YLHI, WNIG…GYVL, and FFTF…LHLL. H83 and H97 together coordinate heme b. Heme b contacts are provided by H182 and H196. Position 201 (H201) interacts with a ubiquinone. The next 4 helical transmembrane spans lie at 226–246, 288–308, 320–340, and 347–367; these read YKDL…ALLN, LGGV…PTLH, SSQT…WIGG, and FIII…FFIP.

It belongs to the cytochrome b family. As to quaternary structure, the cytochrome bc1 complex contains 3 respiratory subunits (MT-CYB, CYC1 and UQCRFS1), 2 core proteins (UQCRC1 and UQCRC2) and probably 6 low-molecular weight proteins. Heme b serves as cofactor.

Its subcellular location is the mitochondrion inner membrane. Its function is as follows. Component of the ubiquinol-cytochrome c reductase complex (complex III or cytochrome b-c1 complex) that is part of the mitochondrial respiratory chain. The b-c1 complex mediates electron transfer from ubiquinol to cytochrome c. Contributes to the generation of a proton gradient across the mitochondrial membrane that is then used for ATP synthesis. The protein is Cytochrome b (mt-cyb) of Lepisosteus oculatus (Spotted gar).